Reading from the N-terminus, the 633-residue chain is Phospholipid--sterol O-acyltransferase (633 aa).

Topologically, residues 1–6 are cytoplasmic; it reads MGANSK. Residues 7 to 29 form a helical; Signal-anchor for type II membrane protein membrane-spanning segment; the sequence is SVTASFTVIAVFFLICGGRTAVE. The Lumenal portion of the chain corresponds to 30-633; that stretch reads DETEFHGDYS…TSANMLLQYI (604 aa). S195 acts as the Acyl-ester intermediate in catalysis. Active-site charge relay system residues include D461 and H505.

The protein belongs to the AB hydrolase superfamily. Lipase family.

It is found in the microsome membrane. In terms of biological role, involved in lipid catabolism. Essential for sterol esters biosynthesis in leaves and seeds, but not in flowers. Plays a role in controlling the free sterol content of leaves. Catalyzes the transacylation of acyl groups from phospholipids to a variety of different sterols. Prefers phosphatidylethanolamine over phosphatidylcholine as an acyl donor. Not active toward neutral lipids. Highly specific for position sn-2, which in plant lipids is essentially devoid of saturated acyl groups. Broad sterol specificity (cholesterol &gt; campesterol &gt; sitosterol &gt; stigmasterol), but no activity with lupeol or beta-amyrin. The protein is Phospholipid--sterol O-acyltransferase (PSAT) of Arabidopsis thaliana (Mouse-ear cress).